Here is a 388-residue protein sequence, read N- to C-terminus: Ferrochelatase (388 aa).

2 residues coordinate Fe cation: H196 and E277.

Belongs to the ferrochelatase family.

Its subcellular location is the cytoplasm. It catalyses the reaction heme b + 2 H(+) = protoporphyrin IX + Fe(2+). Its pathway is porphyrin-containing compound metabolism; protoheme biosynthesis; protoheme from protoporphyrin-IX: step 1/1. Its function is as follows. Catalyzes the ferrous insertion into protoporphyrin IX. The polypeptide is Ferrochelatase (Trichormus variabilis (strain ATCC 29413 / PCC 7937) (Anabaena variabilis)).